A 253-amino-acid chain; its full sequence is HTH-type transcriptional regulator YdeO (253 aa).

The region spanning 137–233 (GKVRNIVNMK…GNSPKRVSKE (97 aa)) is the HTH araC/xylS-type domain. 2 consecutive DNA-binding regions (H-T-H motif) follow at residues 154–175 (KDIC…KQEQ) and 200–223 (VNKI…RKHF).

Induces the expression of gadE and mdtEF. Could also regulate the expression of other genes involved in acid resistance. The polypeptide is HTH-type transcriptional regulator YdeO (Escherichia coli O157:H7).